We begin with the raw amino-acid sequence, 995 residues long: DNA repair protein Rev1 (995 aa).

The BRCT domain maps to 35-121 (RKSDLFQGIS…KIVDYKPYLL (87 aa)). 2 disordered regions span residues 135 to 164 (GKPK…DSTK) and 182 to 211 (VATS…TTAR). A compositionally biased stretch (basic and acidic residues) spans 136 to 164 (KPKDNGANESKSDVEPPKDKAEVEVDSTK). Residues 192-211 (ASESKITNLSTTSNNSTTAR) show a composition bias toward low complexity. The region spanning 275–505 (VMHIDMDCFF…MSLDLLPGVG (231 aa)) is the UmuC domain. Aspartate 279 contributes to the Mg(2+) binding site. DCTP contacts are provided by residues 361–367 (SCSYEAR), asparagine 373, and aspartate 421. Aspartate 421 contributes to the Mg(2+) binding site. Residue glutamate 422 is part of the active site. Positions 696-868 (SEMRKDKPIP…HYIRSDQIVA (173 aa)) are interaction with PolI. The segment at 878–995 (VNPHILKLIS…IEYIRCIKCS (118 aa)) is interaction with PolH/DNApol-eta.

Belongs to the DNA polymerase type-Y family. In terms of assembly, interacts (via C-terminus) with PolH/DNApol-eta (via C-terminal regions). Interacts (via C-terminus) with PolI. Mg(2+) is required as a cofactor.

It localises to the nucleus. Its function is as follows. Deoxycytidyl transferase involved in DNA repair. Transfers a dCMP residue from dCTP to the 3'-end of a DNA primer in a template-dependent reaction. May assist in the first step in the bypass of abasic lesions by the insertion of a nucleotide opposite the lesion. Required for normal induction of mutations by physical and chemical agents. During homologous recombination (HR) repair of DNA double-strand breaks (DSBs) regulates the extent of repair synthesis. Possibly recruits the DNA polymerase zeta complex or another translesion polymerase to early DSB repair intermediates to initiate repair synthesis, while also blocking the access of more processive polymerases preventing them from acting during the initial stages of HR repair. The sequence is that of DNA repair protein Rev1 from Drosophila melanogaster (Fruit fly).